We begin with the raw amino-acid sequence, 203 residues long: Ribosomal RNA small subunit methyltransferase G (203 aa).

Residues G73, L78, 124–125, and R139 each bind S-adenosyl-L-methionine; that span reads VE.

It belongs to the methyltransferase superfamily. RNA methyltransferase RsmG family.

The protein resides in the cytoplasm. The enzyme catalyses guanosine(527) in 16S rRNA + S-adenosyl-L-methionine = N(7)-methylguanosine(527) in 16S rRNA + S-adenosyl-L-homocysteine. Specifically methylates the N7 position of guanine in position 527 of 16S rRNA. In Haemophilus influenzae (strain 86-028NP), this protein is Ribosomal RNA small subunit methyltransferase G.